Reading from the N-terminus, the 90-residue chain is Acylphosphatase (90 aa).

The Acylphosphatase-like domain occupies 3–90 (AVTLKATGRV…QNYHDFRITN (88 aa)). Residues arginine 18 and asparagine 36 contribute to the active site.

It belongs to the acylphosphatase family.

It carries out the reaction an acyl phosphate + H2O = a carboxylate + phosphate + H(+). The protein is Acylphosphatase (acyP) of Lactiplantibacillus plantarum (strain ATCC BAA-793 / NCIMB 8826 / WCFS1) (Lactobacillus plantarum).